Consider the following 194-residue polypeptide: CASP-like protein 2D1 (194 aa).

Basic and acidic residues predominate over residues 1–16; the sequence is MRDNNNNNTREEERSS. Positions 1–26 are disordered; the sequence is MRDNNNNNTREEERSSSSKQQQPQAP. Topologically, residues 1-30 are cytoplasmic; sequence MRDNNNNNTREEERSSSSKQQQPQAPMSLK. A helical membrane pass occupies residues 31-51; sequence IIDSCLRLSVVPLSVATIWLT. Residues 52–74 are Extracellular-facing; it reads VTNHESNPDYGNLEYNSIMGLKY. A helical transmembrane segment spans residues 75–95; the sequence is MVGVSAISAIYALLSTVSSWV. The Cytoplasmic segment spans residues 96 to 110; the sequence is TCLVSKAWLFFIPDQ. Residues 111-133 traverse the membrane as a helical segment; the sequence is VLAYVMTTSVAGATEIVYLLNKG. The Extracellular portion of the chain corresponds to 134–152; the sequence is DKIVTWSEMCSSYPHYCSK. Residues 153-173 traverse the membrane as a helical segment; that stretch reads LTIALGLHVFVLFFFLFLSVI. Topologically, residues 174–194 are cytoplasmic; it reads SAYRAFSPFDPPCDSQTNNDA.

The protein belongs to the Casparian strip membrane proteins (CASP) family. Homodimer and heterodimers.

It localises to the cell membrane. In Arabidopsis thaliana (Mouse-ear cress), this protein is CASP-like protein 2D1.